A 424-amino-acid polypeptide reads, in one-letter code: UDP-N-acetylglucosamine 1-carboxyvinyltransferase (424 aa).

22-23 provides a ligand contact to phosphoenolpyruvate; sequence KN. Arg95 contacts UDP-N-acetyl-alpha-D-glucosamine. The active-site Proton donor is the Cys119. 2-(S-cysteinyl)pyruvic acid O-phosphothioketal is present on Cys119. UDP-N-acetyl-alpha-D-glucosamine contacts are provided by residues 124 to 128, Asp311, and Ile333; that span reads RPVDQ.

Belongs to the EPSP synthase family. MurA subfamily.

Its subcellular location is the cytoplasm. The enzyme catalyses phosphoenolpyruvate + UDP-N-acetyl-alpha-D-glucosamine = UDP-N-acetyl-3-O-(1-carboxyvinyl)-alpha-D-glucosamine + phosphate. It participates in cell wall biogenesis; peptidoglycan biosynthesis. Functionally, cell wall formation. Adds enolpyruvyl to UDP-N-acetylglucosamine. This chain is UDP-N-acetylglucosamine 1-carboxyvinyltransferase, found in Polaromonas sp. (strain JS666 / ATCC BAA-500).